The sequence spans 51 residues: Small ribosomal subunit protein uS13 (51 aa).

The protein belongs to the universal ribosomal protein uS13 family. Part of the 30S ribosomal subunit. Forms a loose heterodimer with protein S19. Forms two bridges to the 50S subunit in the 70S ribosome.

In terms of biological role, located at the top of the head of the 30S subunit, it contacts several helices of the 16S rRNA. In the 70S ribosome it contacts the 23S rRNA (bridge B1a) and protein L5 of the 50S subunit (bridge B1b), connecting the 2 subunits; these bridges are implicated in subunit movement. Contacts the tRNAs in the A and P-sites. The chain is Small ribosomal subunit protein uS13 (rpsM) from Lactococcus lactis subsp. cremoris (Streptococcus cremoris).